The chain runs to 175 residues: Catabolic 3-dehydroquinase (175 aa).

Catalysis depends on Y26, which acts as the Proton acceptor. Substrate is bound by residues N104, H110, and D117. H130 functions as the Proton donor in the catalytic mechanism. Substrate contacts are provided by residues 131-132 and R141; that span reads VS.

Belongs to the type-II 3-dehydroquinase family. Homododecamer. Adopts a ring-like structure, composed of an arrangement of two hexameric rings stacked on top of one another.

It carries out the reaction 3-dehydroquinate = 3-dehydroshikimate + H2O. It functions in the pathway aromatic compound metabolism; 3,4-dihydroxybenzoate biosynthesis; 3,4-dihydroxybenzoate from 3-dehydroquinate: step 1/2. In terms of biological role, is involved in the catabolism of quinate. Allows the utilization of quinate as carbon source via the beta-ketoadipate pathway. The sequence is that of Catabolic 3-dehydroquinase from Sordaria macrospora (strain ATCC MYA-333 / DSM 997 / K(L3346) / K-hell).